The following is a 64-amino-acid chain: Large ribosomal subunit protein bL35 (64 aa).

The protein belongs to the bacterial ribosomal protein bL35 family.

The polypeptide is Large ribosomal subunit protein bL35 (Vibrio parahaemolyticus serotype O3:K6 (strain RIMD 2210633)).